The primary structure comprises 2032 residues: Cytoskeleton-associated protein 5 (2032 aa).

2 TOG regions span residues 1–223 and 268–502; these read MGDD…KLPT and YELL…LIHG. Lys48 bears the N6-acetyllysine mark. 3 HEAT repeats span residues 159–197, 356–394, and 434–472; these read IILL…WIRD, GQYA…TTTL, and KSLL…VVGE. The segment at 516–579 is disordered; it reads PLPGRTAASG…GTKNKKGLET (64 aa). Residues 543–554 are compositionally biased toward low complexity; the sequence is LKKAPAAKAGGP. The segment at 588 to 817 is TOG 3; sequence SIEVCEEKAS…EFEKMQGQSP (230 aa). One copy of the HEAT 4 repeat lies at 750-788; that stretch reads GLNVKAFISNVKTALAATNPAVRTAAITLLGVMYLYVGP. The tract at residues 811 to 851 is disordered; sequence KMQGQSPPAPTRGISKHSTSGTDEGEDGDEPDDGSNDVVDL. Phosphoserine occurs at positions 816 and 845. The segment covering 833–845 has biased composition (acidic residues); the sequence is DEGEDGDEPDDGS. TOG stretches follow at residues 853-1081 and 1193-1428; these read PRTE…VNMP and IEQL…KRPS. HEAT repeat units follow at residues 855-893, 936-974, and 1013-1051; these read TEIS…DAKF, KQHV…QTGM, and PTDL…HLGY. The interval 1077–1160 is disordered; sequence KVNMPAKPAP…KEDEDKSGPI (84 aa). HEAT repeat units lie at residues 1284 to 1322, 1324 to 1357, and 1361 to 1399; these read ENEA…VYPA, KMFP…SYGM, and QPTP…VHGD. Residues 1422 to 1443 form a disordered region; the sequence is RSAKRPSAAPIKQVEEKPQRAQ. At Ser1469 the chain carries Phosphoserine. The tract at residues 1801 to 1822 is disordered; that stretch reads SMDQTGSKSDKETEKGASRIDE. Over residues 1808 to 1822 the composition is skewed to basic and acidic residues; that stretch reads KSDKETEKGASRIDE. At Ser1861 the chain carries Phosphoserine. Positions 1932–1957 are interaction with TACC3; sequence PSVYLERLKILRQRCGLDNTKQDDRP. The disordered stretch occupies residues 1949–2032; it reads DNTKQDDRPP…RLERIKSSRK (84 aa). Residues 1971–1983 are compositionally biased toward polar residues; sequence VASSTDMLHSKLS. Positions 1984–1997 are enriched in basic and acidic residues; sequence QLRESREQHQHSDL. Positions 2002-2014 are enriched in low complexity; that stretch reads THSSGTVTSSSST. Residues 2018 to 2032 are compositionally biased toward basic and acidic residues; it reads DDLKKRLERIKSSRK.

This sequence belongs to the TOG/XMAP215 family. As to quaternary structure, interacts with TACC1. Interacts with SLAIN2 and SLAIN1. Interacts with HNRNPA2B1. Interacts with TACC3 independently of clathrin. Interacts with TACC3 and clathrin forming the TACC3/ch-TOG/clathrin complex located at spindle inter-microtubules bridges. Interacts with NDC80; indicative for an association with the NDC80 complex. As to expression, overexpressed in hepatomas and colonic tumors. Also expressed in skeletal muscle, brain, heart, placenta, lung, liver, kidney and pancreas. Expression is elevated in the brain; highly expressed in the Purkinje cell bodies of the cerebellum.

It localises to the cytoplasm. Its subcellular location is the cytoskeleton. The protein localises to the microtubule organizing center. It is found in the centrosome. The protein resides in the spindle pole. It localises to the spindle. Its subcellular location is the chromosome. The protein localises to the centromere. It is found in the kinetochore. Binds to the plus end of microtubules and regulates microtubule dynamics and microtubule organization. Acts as a processive microtubule polymerase. Promotes cytoplasmic microtubule nucleation and elongation. Plays a major role in organizing spindle poles. In spindle formation protects kinetochore microtubules from depolymerization by KIF2C and has an essential role in centrosomal microtubule assembly independently of KIF2C activity. Contributes to centrosome integrity. Acts as a component of the TACC3/ch-TOG/clathrin complex proposed to contribute to stabilization of kinetochore fibers of the mitotic spindle by acting as inter-microtubule bridge. The TACC3/ch-TOG/clathrin complex is required for the maintenance of kinetochore fiber tension. Enhances the strength of NDC80 complex-mediated kinetochore-tip microtubule attachments. This is Cytoskeleton-associated protein 5 (CKAP5) from Homo sapiens (Human).